Reading from the N-terminus, the 491-residue chain is Mitochondrial MYO2 receptor-related protein 1 (491 aa).

Residue Thr-12 is modified to Phosphothreonine. A phosphoserine mark is found at Ser-16 and Ser-37. Residues 295-384 (NAEEANSREK…CKKVLKKLTE (90 aa)) are a coiled coil. An interaction with MYO2 region spans residues 300–439 (NSREKSNLDI…GTSSEEDHLT (140 aa)). A disordered region spans residues 419-491 (KKIEEQPDSS…LPVQVEKKEK (73 aa)). Residues 461 to 472 (SAISTTASVQSG) are compositionally biased toward polar residues.

As to quaternary structure, interacts with MYO2 and PCL7. Post-translationally, phosphorylated by the cyclin-CDK PCL7-PHO85.

It is found in the bud tip. It localises to the bud neck. The protein resides in the mitochondrion outer membrane. Its function is as follows. Involved in the guiding of mitochondrial tubules to the bud tip during cell division. The polypeptide is Mitochondrial MYO2 receptor-related protein 1 (MMR1) (Saccharomyces cerevisiae (strain ATCC 204508 / S288c) (Baker's yeast)).